The chain runs to 265 residues: Sulfur carrier protein FdhD (265 aa).

The active-site Cysteine persulfide intermediate is the Cys-107.

Belongs to the FdhD family.

The protein resides in the cytoplasm. In terms of biological role, required for formate dehydrogenase (FDH) activity. Acts as a sulfur carrier protein that transfers sulfur from IscS to the molybdenum cofactor prior to its insertion into FDH. This is Sulfur carrier protein FdhD from Staphylococcus aureus (strain NCTC 8325 / PS 47).